A 56-amino-acid polypeptide reads, in one-letter code: Alpha-conotoxin EpI (56 aa).

The N-terminal stretch at 1 to 16 (MFTVFLLVVLATTVVS) is a signal peptide. A propeptide spanning residues 17-39 (FTSDRASDSRKDAASGLIALTIK) is cleaved from the precursor. 2 disulfides stabilise this stretch: Cys41–Cys47 and Cys42–Cys55. Residues 43–45 (SDP) are ser-Xaa-Pro motif, crucial for potent interaction with nAChR. Tyr54 carries the sulfotyrosine modification. Cys55 carries the post-translational modification Cysteine amide.

The protein belongs to the conotoxin A superfamily. Post-translationally, both tyrosine sulfation and C-terminal amidation are important for activity and structure stability. As to expression, expressed by the venom duct.

It localises to the secreted. Functionally, alpha-conotoxins act on postsynaptic membranes, they bind to the nicotinic acetylcholine receptors (nAChR) and thus inhibit them. This native peptide blocks mammalian nicotinic acetylcholine receptors composed of alpha-3-beta-2/CHRNA3-CHRNB2 and alpha-3-beta-4/CHRNA3-CHRNB4 subunits. This Conus episcopatus (Bishop's cone) protein is Alpha-conotoxin EpI.